Reading from the N-terminus, the 289-residue chain is Probable aquaporin PIP2-6 (289 aa).

Residue Met-1 is modified to N-acetylmethionine. The Cytoplasmic portion of the chain corresponds to 1–38 (MTKDELTEEESLSGKDYLDPPPVKTFEVRELKKWSFYR). A Phosphothreonine modification is found at Thr-7. Residue Ser-11 is modified to Phosphoserine. Residues 39 to 59 (AVIAEFIATLLFLYVTVLTVI) traverse the membrane as a helical segment. At 60-80 (GFKSQTDINAGGGACASVGLL) the chain is on the extracellular side. The chain crosses the membrane as a helical span at residues 81–101 (GISWAFGGMIFILVYCTAGIS). The Cytoplasmic portion of the chain corresponds to 102–124 (GGHINPAVTFGLFLASKVSLVRA). The short motif at 106–108 (NPA) is the NPA 1 element. A helical membrane pass occupies residues 125–145 (VSYMVAQCLGATCGVGLVKVF). The Extracellular portion of the chain corresponds to 146–165 (QSTYYNRYGGGANMLSDGYN). Residues 166–186 (VGVGVGAEIIGTFVLVYTVFS) form a helical membrane-spanning segment. Residues 187–200 (ATDPKRNARDSHIP) lie on the Cytoplasmic side of the membrane. A helical membrane pass occupies residues 201-221 (VLAPLPIGFSVFMVHLATIPI). The Extracellular segment spans residues 222–248 (TGTGINPARSFGAAVIYNNQKAWDDQW). The NPA 2 signature appears at 227–229 (NPA). The chain crosses the membrane as a helical span at residues 249 to 269 (IFWVGPFVGAAIAAFYHQFVL). The Cytoplasmic segment spans residues 270 to 289 (RAGAMKAYGSVRSQLHELHA). Phosphoserine is present on residues Ser-279 and Ser-282.

The protein belongs to the MIP/aquaporin (TC 1.A.8) family. PIP (TC 1.A.8.11) subfamily. In terms of tissue distribution, expressed above ground, and in flower buds.

The protein localises to the cell membrane. In terms of biological role, aquaporins facilitate the transport of water and small neutral solutes across cell membranes. The chain is Probable aquaporin PIP2-6 (PIP2-6) from Arabidopsis thaliana (Mouse-ear cress).